The sequence spans 211 residues: Flagellar calcium-binding protein (211 aa).

A disordered region spans residues 1 to 29 (MGACGSKGSTSDKGLASDKDGKKAKDRKE). Over residues 15 to 29 (LASDKDGKKAKDRKE) the composition is skewed to basic and acidic residues. EF-hand domains follow at residues 45–80 (EAKQRRIELFKKFDKNETGKLCYDEVHSGCLEVLKL), 81–116 (DEFTPRVRDITKRAFDKARALGSKLENKGSEDFVEF), 127–162 (YDFFELTVMFDEIDASGNMLVDEEELKRAVPKLEAW), and 164–199 (AKVEDPAALFKELDKNGTGSVTFDEFAAWASAVKLD). Ca(2+) contacts are provided by Asp-58, Asn-60, Thr-62, Lys-64, and Glu-69. Asp-140, Ser-142, Asn-144, Glu-151, Asp-177, Asn-179, Thr-181, Ser-183, and Glu-188 together coordinate Ca(2+).

The protein belongs to the calflagin family.

It localises to the cell projection. The protein resides in the cilium. The protein localises to the flagellum. In terms of biological role, may contribute to the rapid motility of the trypanosomes, playing a role either in flagellar structure or in calcium metabolism. Could alternate between a GDP-bound inactive form to a calcium/GTP-bound active form. The chain is Flagellar calcium-binding protein (FCABP) from Trypanosoma cruzi.